The following is a 155-amino-acid chain: Deoxyuridine 5'-triphosphate nucleotidohydrolase (155 aa).

Residues 74-76 (RSG), Asn-87, and 91-93 (TID) each bind substrate.

The protein belongs to the dUTPase family. Mg(2+) serves as cofactor.

The enzyme catalyses dUTP + H2O = dUMP + diphosphate + H(+). It functions in the pathway pyrimidine metabolism; dUMP biosynthesis; dUMP from dCTP (dUTP route): step 2/2. This enzyme is involved in nucleotide metabolism: it produces dUMP, the immediate precursor of thymidine nucleotides and it decreases the intracellular concentration of dUTP so that uracil cannot be incorporated into DNA. The protein is Deoxyuridine 5'-triphosphate nucleotidohydrolase of Dinoroseobacter shibae (strain DSM 16493 / NCIMB 14021 / DFL 12).